The following is a 238-amino-acid chain: Calmodulin-binding protein 25 (238 aa).

The segment covering 68-78 has biased composition (polar residues); the sequence is STNTLSSTVSG. Residues 68–87 are disordered; sequence STNTLSSTVSGASDPEIIGG. A Bipartite nuclear localization signal motif is present at residues 92 to 108; sequence KRNCLLTDGKAAKRRAR. Residues 125-134 carry the VQ motif; it reads FRQMVQQVTG. Positions 201 to 220 are disordered; sequence SSVGLPSGKPSATADPGGSA.

Interacts with calmodulin (CaM). Interacts with WRKY25 and WRKY51. As to expression, expressed in leaves, flowers and siliques.

The protein resides in the nucleus. Functionally, calmodulin-binding protein that functions as a negative regulator of osmotic stress tolerance. The sequence is that of Calmodulin-binding protein 25 from Arabidopsis thaliana (Mouse-ear cress).